A 1183-amino-acid polypeptide reads, in one-letter code: DNA-directed RNA polymerase subunit beta (1183 aa).

The segment at 1155 to 1183 (ADVDEDDVNEHKVNIQQSSIPESQKETTD) is disordered.

Belongs to the RNA polymerase beta chain family. As to quaternary structure, the RNAP catalytic core consists of 2 alpha, 1 beta, 1 beta' and 1 omega subunit. When a sigma factor is associated with the core the holoenzyme is formed, which can initiate transcription.

The enzyme catalyses RNA(n) + a ribonucleoside 5'-triphosphate = RNA(n+1) + diphosphate. Functionally, DNA-dependent RNA polymerase catalyzes the transcription of DNA into RNA using the four ribonucleoside triphosphates as substrates. This chain is DNA-directed RNA polymerase subunit beta, found in Staphylococcus carnosus (strain TM300).